Here is a 54-residue protein sequence, read N- to C-terminus: Relaxin (54 aa).

Residue Q1 is modified to Pyrrolidone carboxylic acid. Disulfide bonds link C10–C41, C22–C54, and C40–C45.

It belongs to the insulin family. In terms of assembly, heterodimer of a B chain and an A chain linked by two disulfide bonds.

The protein localises to the secreted. Its function is as follows. Relaxin is an ovarian hormone that acts with estrogen to produce dilatation of the birth canal in many mammals. This is Relaxin from Balaenoptera edeni (Pigmy Bryde's whale).